The sequence spans 136 residues: Small cardioactive peptides (136 aa).

The first 24 residues, 1–24 (METSVSRVTVSLTLLVLIICSADA), serve as a signal peptide directing secretion. 2 positions are modified to methionine amide: M33 and M46. A propeptide spans 49–135 (SQMKTETGTD…VLSKLKSLLQ (87 aa)) (carboxy-terminal peptide).

This sequence belongs to the SCP family. Contains three disulfide bonds. Highly expressed in the buccal ganglion.

The protein resides in the secreted. Its function is as follows. Involved in the stimulation of contractile activity in the gut, the increase of the amplitude of the heart beat, and enhancement of the contractile response of the radula closer muscle. The sequence is that of Small cardioactive peptides from Aplysia californica (California sea hare).